We begin with the raw amino-acid sequence, 777 residues long: Histone-lysine N-methyltransferase set9 (777 aa).

Positions 117 to 231 (CPFEVNATNR…VGEEITVTYS (115 aa)) constitute an SET domain. Disordered regions lie at residues 263–414 (AVQK…ILSP) and 682–718 (RMGS…QGQY). The span at 291–301 (TALQASRTPSV) shows a compositional bias: polar residues. Over residues 323-337 (TSTTDSAAQGAGADG) the composition is skewed to low complexity. Composition is skewed to polar residues over residues 371–405 (TAPS…QGSE) and 688–698 (KQGSSAPSTKG).

Belongs to the class V-like SAM-binding methyltransferase superfamily. Histone-lysine methyltransferase family. Suvar4-20 subfamily.

The protein localises to the nucleus. The protein resides in the chromosome. It carries out the reaction L-lysyl(20)-[histone H4] + 3 S-adenosyl-L-methionine = N(6),N(6),N(6)-trimethyl-L-lysyl(20)-[histone H4] + 3 S-adenosyl-L-homocysteine + 3 H(+). Histone methyltransferase that trimethylates 'Lys-20' of histone H4 to form H4K20me3. In Neurospora crassa (strain ATCC 24698 / 74-OR23-1A / CBS 708.71 / DSM 1257 / FGSC 987), this protein is Histone-lysine N-methyltransferase set9 (hlm-1).